We begin with the raw amino-acid sequence, 160 residues long: SsrA-binding protein (160 aa).

The disordered stretch occupies residues 132 to 160; that stretch reads KIHDKRDDMQKKDAQQEIARALKSSNRYE. Positions 135 to 146 are enriched in basic and acidic residues; sequence DKRDDMQKKDAQ.

It belongs to the SmpB family.

The protein localises to the cytoplasm. Functionally, required for rescue of stalled ribosomes mediated by trans-translation. Binds to transfer-messenger RNA (tmRNA), required for stable association of tmRNA with ribosomes. tmRNA and SmpB together mimic tRNA shape, replacing the anticodon stem-loop with SmpB. tmRNA is encoded by the ssrA gene; the 2 termini fold to resemble tRNA(Ala) and it encodes a 'tag peptide', a short internal open reading frame. During trans-translation Ala-aminoacylated tmRNA acts like a tRNA, entering the A-site of stalled ribosomes, displacing the stalled mRNA. The ribosome then switches to translate the ORF on the tmRNA; the nascent peptide is terminated with the 'tag peptide' encoded by the tmRNA and targeted for degradation. The ribosome is freed to recommence translation, which seems to be the essential function of trans-translation. The polypeptide is SsrA-binding protein (Leptospira borgpetersenii serovar Hardjo-bovis (strain JB197)).